The primary structure comprises 251 residues: 3-deoxy-manno-octulosonate cytidylyltransferase (251 aa).

Belongs to the KdsB family.

Its subcellular location is the cytoplasm. It carries out the reaction 3-deoxy-alpha-D-manno-oct-2-ulosonate + CTP = CMP-3-deoxy-beta-D-manno-octulosonate + diphosphate. Its pathway is nucleotide-sugar biosynthesis; CMP-3-deoxy-D-manno-octulosonate biosynthesis; CMP-3-deoxy-D-manno-octulosonate from 3-deoxy-D-manno-octulosonate and CTP: step 1/1. It participates in bacterial outer membrane biogenesis; lipopolysaccharide biosynthesis. In terms of biological role, activates KDO (a required 8-carbon sugar) for incorporation into bacterial lipopolysaccharide in Gram-negative bacteria. The protein is 3-deoxy-manno-octulosonate cytidylyltransferase of Vibrio vulnificus (strain CMCP6).